The sequence spans 444 residues: L-cysteine:1D-myo-inositol 2-amino-2-deoxy-alpha-D-glucopyranoside ligase (444 aa).

Residues 1–13 (MPCDRKTSPDQHH) are compositionally biased toward basic and acidic residues. A disordered region spans residues 1 to 21 (MPCDRKTSPDQHHALQIHRHH). Residue C75 participates in Zn(2+) binding. Residues 75–78 (CGIT), T90, and 113–115 (NIT) contribute to the L-cysteinyl-5'-AMP site. Residues 77 to 87 (ITPYDATHLGH) carry the 'HIGH' region motif. A 'ERGGDP' region motif is present at residues 219 to 224 (ERGGDP). Residue W259 coordinates L-cysteinyl-5'-AMP. C263 serves as a coordination point for Zn(2+). 281 to 283 (GSD) serves as a coordination point for L-cysteinyl-5'-AMP. Position 288 (H288) interacts with Zn(2+). An L-cysteinyl-5'-AMP-binding site is contributed by I315. The short motif at 321 to 325 (KMSKS) is the 'KMSKS' region element.

Belongs to the class-I aminoacyl-tRNA synthetase family. MshC subfamily. As to quaternary structure, monomer. Zn(2+) serves as cofactor.

The catalysed reaction is 1D-myo-inositol 2-amino-2-deoxy-alpha-D-glucopyranoside + L-cysteine + ATP = 1D-myo-inositol 2-(L-cysteinylamino)-2-deoxy-alpha-D-glucopyranoside + AMP + diphosphate + H(+). Catalyzes the ATP-dependent condensation of GlcN-Ins and L-cysteine to form L-Cys-GlcN-Ins. The chain is L-cysteine:1D-myo-inositol 2-amino-2-deoxy-alpha-D-glucopyranoside ligase from Mycolicibacterium gilvum (strain PYR-GCK) (Mycobacterium gilvum (strain PYR-GCK)).